The sequence spans 201 residues: dTTP/UTP pyrophosphatase (201 aa).

Residue D73 is the Proton acceptor of the active site.

It belongs to the Maf family. YhdE subfamily. The cofactor is a divalent metal cation.

The protein resides in the cytoplasm. It catalyses the reaction dTTP + H2O = dTMP + diphosphate + H(+). The catalysed reaction is UTP + H2O = UMP + diphosphate + H(+). In terms of biological role, nucleoside triphosphate pyrophosphatase that hydrolyzes dTTP and UTP. May have a dual role in cell division arrest and in preventing the incorporation of modified nucleotides into cellular nucleic acids. In Pseudomonas aeruginosa (strain ATCC 15692 / DSM 22644 / CIP 104116 / JCM 14847 / LMG 12228 / 1C / PRS 101 / PAO1), this protein is dTTP/UTP pyrophosphatase.